A 292-amino-acid chain; its full sequence is Aquaporin-3 (292 aa).

Topologically, residues 1–24 (MGRQKELVNRCGEMLHIRYRLLRQ) are cytoplasmic. Residues 25–42 (ALAECLGTLILVMFGCGS) form a helical membrane-spanning segment. The Extracellular segment spans residues 43–56 (VAQVVLSRGTHGGF). A helical membrane pass occupies residues 57-74 (LTINLAFGFAVTLGILIA). The Cytoplasmic portion of the chain corresponds to 75 to 78 (GQVS). An intramembrane region (discontinuously helical) is located at residues 79–92 (GAHLNPAVTFAMCF). Residues 83–85 (NPA) carry the NPA 1 motif. Topologically, residues 93–100 (LAREPWIK) are cytoplasmic. Residues 101–121 (LPVYTLAQTLGAFLGAGIIFG) traverse the membrane as a helical segment. Over 122 to 159 (LYYDAIWAFANNQLIVSGPNGTAGIFATYPSGHLDMVN) the chain is Extracellular. Asn-141 is a glycosylation site (N-linked (GlcNAc...) asparagine). The helical transmembrane segment at 160-177 (GFFDQFIGTASLIVCVLA) threads the bilayer. The Cytoplasmic segment spans residues 178–189 (IVDPYNNPVPRG). The helical transmembrane segment at 190 to 206 (LEAFTVGLVVLVIGTSM) threads the bilayer. Topologically, residues 207–210 (GFNS) are extracellular. An intramembrane region (discontinuously helical) is located at residues 211–224 (GYAVNPARDFGPRL). Residues 215 to 217 (NPA) carry the NPA 2 motif. The Extracellular portion of the chain corresponds to 225–242 (FTAIAGWGSEVFTTGRHW). Residues 243-264 (WWVPIVSPLLGSIAGVFVYQLM) form a helical membrane-spanning segment. Topologically, residues 265–292 (IGCHLEPPPPSTDEENVKLSHVKHKEQM) are cytoplasmic.

This sequence belongs to the MIP/aquaporin (TC 1.A.8) family. Homotetramer; each monomer provides an independent glycerol/water pore. Could also exist in other oligomeric states.

It localises to the cell membrane. It is found in the basolateral cell membrane. It carries out the reaction glycerol(in) = glycerol(out). The catalysed reaction is H2O(in) = H2O(out). It catalyses the reaction urea(in) = urea(out). The enzyme catalyses H2O2(out) = H2O2(in). Functionally, aquaglyceroporins form homotetrameric transmembrane channels, with each monomer independently mediating glycerol and water transport across the plasma membrane along their osmotic gradient. Could also be permeable to urea. Also participates in cell permeability to H2O2 and H2O2-mediated signaling. In skin, transports glycerol to the epidermis and stratum corneum, where it maintains hydration, elasticity, and supports lipid biosynthesis for barrier repair. In kidney, contributes to the reabsorption of water, helping the body maintain proper fluid balance. This Bos taurus (Bovine) protein is Aquaporin-3.